The chain runs to 281 residues: Proline iminopeptidase PfmaB (281 aa).

One can recognise an AB hydrolase-1 domain in the interval 23–267 (PLVITLHGGR…NANHSVHVEK (245 aa)).

The protein belongs to the peptidase S33 family.

It carries out the reaction Release of N-terminal proline from a peptide.. In terms of biological role, proline iminopeptidase; part of the gene cluster that mediates the biosynthesis of dihydroxynaphthalene (DHN)-melanin, a bluish-green pigment forming a dark layer in the conidial wall that protects the conidia from UV radiations. The first step of the pathway is the production of the pentaketide 1,3,6,8-tetrahydroxynaphthalene (1,3,6,8-THN or T4HN) by the polyketide synthase PfmaE though condensation of acetyl-CoA with malonyl-CoA. T4HN is not stable and easily oxidizes into the stable form flaviolin. T4HN is also substrate of the hydroxynaphthalene reductase PfmaG to yield scytalone. The scytalone dehydratase PfmaJ then reduces scytalone to 1,3,8-THN. 1,3,8-THN is then substrate of the hydroxynaphthalene reductase PfmaI to yield vermelone. Vermelone is further converted by the multicopper oxidase PfmaD to 1,8-DHN. Finally the laccase PFICI_06862 transforms 1,8-DHN to DHN-melanin. The roles of the 5-oxoprolinase PfmaA and the proline iminopeptidase PfmaB within the cluster have not been elucidated yet. This chain is Proline iminopeptidase PfmaB, found in Pestalotiopsis fici (strain W106-1 / CGMCC3.15140).